A 387-amino-acid chain; its full sequence is tRNA-specific 2-thiouridylase MnmA (387 aa).

ATP contacts are provided by residues 34 to 41 (AMSGGVDS) and Met60. Residue Cys127 is the Nucleophile of the active site. Cys127 and Cys223 form a disulfide bridge. Gly151 is a binding site for ATP. An interaction with tRNA region spans residues 173-175 (KDQ). The active-site Cysteine persulfide intermediate is Cys223.

It belongs to the MnmA/TRMU family.

The protein localises to the cytoplasm. The enzyme catalyses S-sulfanyl-L-cysteinyl-[protein] + uridine(34) in tRNA + AH2 + ATP = 2-thiouridine(34) in tRNA + L-cysteinyl-[protein] + A + AMP + diphosphate + H(+). Its function is as follows. Catalyzes the 2-thiolation of uridine at the wobble position (U34) of tRNA, leading to the formation of s(2)U34. The polypeptide is tRNA-specific 2-thiouridylase MnmA (Anaplasma marginale (strain St. Maries)).